The chain runs to 66 residues: Toxin Boma6e (66 aa).

The region spanning 2-64 (RDAYIAQNYN…VPLKVQGKCH (63 aa)) is the LCN-type CS-alpha/beta domain. 3 disulfides stabilise this stretch: Cys-12/Cys-63, Cys-22/Cys-46, and Cys-26/Cys-48.

It belongs to the long (3 C-C) scorpion toxin superfamily. Only three disulfide bridges can be formed, because only seven cysteines are present. As to expression, expressed by the venom gland.

It is found in the secreted. Its function is as follows. Binds voltage-independently at site-3 of sodium channels (Nav) and inhibits the inactivation of the activated channels, thereby blocking neuronal transmission. This is Toxin Boma6e from Buthus occitanus mardochei (Moroccan scorpion).